A 208-amino-acid chain; its full sequence is Holliday junction resolvase RecU (208 aa).

The tract at residues 1-25 (MNYPNGKPFNRNKTKVGRTNDHKSS) is disordered. Mg(2+)-binding residues include T87, D89, E102, and Q121.

Belongs to the RecU family. It depends on Mg(2+) as a cofactor.

It is found in the cytoplasm. The catalysed reaction is Endonucleolytic cleavage at a junction such as a reciprocal single-stranded crossover between two homologous DNA duplexes (Holliday junction).. In terms of biological role, endonuclease that resolves Holliday junction intermediates in genetic recombination. Cleaves mobile four-strand junctions by introducing symmetrical nicks in paired strands. Promotes annealing of linear ssDNA with homologous dsDNA. Required for DNA repair, homologous recombination and chromosome segregation. In Staphylococcus carnosus (strain TM300), this protein is Holliday junction resolvase RecU.